Consider the following 842-residue polypeptide: Type VI secretion system spike protein VgrG2a (842 aa).

Positions 265–291 (RSGAGRPFSESRLRGHRRDARVASVSG) are disordered.

This sequence belongs to the VgrG protein family.

Functionally, part of the H2 type VI secretion system (H2-T6SS) specialized secretion system, which delivers several virulence factors in both prokaryotic and eukaryotic cells during infection. May form the spike at the tip of the elongating tube formed by haemolysin co-regulated protein 2a/Hcp2a. In turn, may allow the delivery of the Tle4 antibacterial toxin to target cells where it exerts its toxicity. Also promotes the release of VgrG2b toxin to the host cell. This is Type VI secretion system spike protein VgrG2a from Pseudomonas aeruginosa (strain ATCC 15692 / DSM 22644 / CIP 104116 / JCM 14847 / LMG 12228 / 1C / PRS 101 / PAO1).